A 161-amino-acid polypeptide reads, in one-letter code: 2-C-methyl-D-erythritol 2,4-cyclodiphosphate synthase (161 aa).

Positions 13 and 15 each coordinate a divalent metal cation. Residues 13 to 15 (DAH) and 40 to 41 (HS) each bind 4-CDP-2-C-methyl-D-erythritol 2-phosphate. H48 is an a divalent metal cation binding site. A 4-CDP-2-C-methyl-D-erythritol 2-phosphate-binding site is contributed by 62–64 (DIG).

Belongs to the IspF family. Homotrimer. It depends on a divalent metal cation as a cofactor.

It catalyses the reaction 4-CDP-2-C-methyl-D-erythritol 2-phosphate = 2-C-methyl-D-erythritol 2,4-cyclic diphosphate + CMP. Its pathway is isoprenoid biosynthesis; isopentenyl diphosphate biosynthesis via DXP pathway; isopentenyl diphosphate from 1-deoxy-D-xylulose 5-phosphate: step 4/6. Functionally, involved in the biosynthesis of isopentenyl diphosphate (IPP) and dimethylallyl diphosphate (DMAPP), two major building blocks of isoprenoid compounds. Catalyzes the conversion of 4-diphosphocytidyl-2-C-methyl-D-erythritol 2-phosphate (CDP-ME2P) to 2-C-methyl-D-erythritol 2,4-cyclodiphosphate (ME-CPP) with a corresponding release of cytidine 5-monophosphate (CMP). The polypeptide is 2-C-methyl-D-erythritol 2,4-cyclodiphosphate synthase (Deinococcus radiodurans (strain ATCC 13939 / DSM 20539 / JCM 16871 / CCUG 27074 / LMG 4051 / NBRC 15346 / NCIMB 9279 / VKM B-1422 / R1)).